A 185-amino-acid polypeptide reads, in one-letter code: Imidazoleglycerol-phosphate dehydratase (185 aa).

It belongs to the imidazoleglycerol-phosphate dehydratase family.

Its subcellular location is the cytoplasm. The catalysed reaction is D-erythro-1-(imidazol-4-yl)glycerol 3-phosphate = 3-(imidazol-4-yl)-2-oxopropyl phosphate + H2O. It functions in the pathway amino-acid biosynthesis; L-histidine biosynthesis; L-histidine from 5-phospho-alpha-D-ribose 1-diphosphate: step 6/9. The polypeptide is Imidazoleglycerol-phosphate dehydratase (Pyrobaculum arsenaticum (strain DSM 13514 / JCM 11321 / PZ6)).